Here is a 760-residue protein sequence, read N- to C-terminus: Xaa-Pro dipeptidyl-peptidase (760 aa).

Catalysis depends on charge relay system residues S349, D469, and H499.

This sequence belongs to the peptidase S15 family. As to quaternary structure, homodimer.

It localises to the cytoplasm. It catalyses the reaction Hydrolyzes Xaa-Pro-|- bonds to release unblocked, N-terminal dipeptides from substrates including Ala-Pro-|-p-nitroanilide and (sequentially) Tyr-Pro-|-Phe-Pro-|-Gly-Pro-|-Ile.. Removes N-terminal dipeptides sequentially from polypeptides having unsubstituted N-termini provided that the penultimate residue is proline. The sequence is that of Xaa-Pro dipeptidyl-peptidase from Streptococcus pyogenes serotype M4 (strain MGAS10750).